The sequence spans 448 residues: Glutamyl-tRNA reductase 2 (448 aa).

Substrate is bound by residues 50-53 (TCER), S109, 114-116 (ESD), and Q120. C51 serves as the catalytic Nucleophile. 190 to 195 (GTGQVA) lines the NADP(+) pocket. A disordered region spans residues 423–448 (DQAVPAYSPQPIGNTSNAAASATPRR). A compositionally biased stretch (polar residues) spans 433 to 442 (PIGNTSNAAA).

This sequence belongs to the glutamyl-tRNA reductase family. In terms of assembly, homodimer.

The catalysed reaction is (S)-4-amino-5-oxopentanoate + tRNA(Glu) + NADP(+) = L-glutamyl-tRNA(Glu) + NADPH + H(+). Its pathway is porphyrin-containing compound metabolism; protoporphyrin-IX biosynthesis; 5-aminolevulinate from L-glutamyl-tRNA(Glu): step 1/2. In terms of biological role, catalyzes the NADPH-dependent reduction of glutamyl-tRNA(Glu) to glutamate 1-semialdehyde (GSA). The chain is Glutamyl-tRNA reductase 2 from Nocardioides sp. (strain ATCC BAA-499 / JS614).